A 396-amino-acid chain; its full sequence is Elongation factor Tu (396 aa).

Residues 10 to 206 form the tr-type G domain; sequence KPHVNVGTIG…ALDTYIPTPE (197 aa). The tract at residues 19–26 is G1; that stretch reads GHVDHGKT. 19–26 provides a ligand contact to GTP; sequence GHVDHGKT. Mg(2+) is bound at residue Thr-26. Residues 60-64 form a G2 region; sequence GITIN. Positions 81-84 are G3; sequence DCPG. GTP-binding positions include 81–85 and 136–139; these read DCPGH and NKCD. Residues 136-139 are G4; that stretch reads NKCD. The segment at 174-176 is G5; it reads SAK.

It belongs to the TRAFAC class translation factor GTPase superfamily. Classic translation factor GTPase family. EF-Tu/EF-1A subfamily. As to quaternary structure, monomer.

Its subcellular location is the cytoplasm. The enzyme catalyses GTP + H2O = GDP + phosphate + H(+). GTP hydrolase that promotes the GTP-dependent binding of aminoacyl-tRNA to the A-site of ribosomes during protein biosynthesis. The protein is Elongation factor Tu of Cupriavidus pinatubonensis (strain JMP 134 / LMG 1197) (Cupriavidus necator (strain JMP 134)).